Here is a 466-residue protein sequence, read N- to C-terminus: Ribulose bisphosphate carboxylase large chain (466 aa).

N6,N6,N6-trimethyllysine is present on Lys-4. 2 residues coordinate substrate: Asn-113 and Thr-163. The active-site Proton acceptor is the Lys-165. Lys-167 is a substrate binding site. Residues Lys-191, Asp-193, and Glu-194 each coordinate Mg(2+). Residue Lys-191 is modified to N6-carboxylysine. His-284 acts as the Proton acceptor in catalysis. The substrate site is built by Arg-285, His-317, and Ser-369.

It belongs to the RuBisCO large chain family. Type I subfamily. Heterohexadecamer of 8 large chains and 8 small chains; disulfide-linked. The disulfide link is formed within the large subunit homodimers. Requires Mg(2+) as cofactor. In terms of processing, the disulfide bond which can form in the large chain dimeric partners within the hexadecamer appears to be associated with oxidative stress and protein turnover.

The protein resides in the plastid. It localises to the chloroplast. The catalysed reaction is 2 (2R)-3-phosphoglycerate + 2 H(+) = D-ribulose 1,5-bisphosphate + CO2 + H2O. The enzyme catalyses D-ribulose 1,5-bisphosphate + O2 = 2-phosphoglycolate + (2R)-3-phosphoglycerate + 2 H(+). RuBisCO catalyzes two reactions: the carboxylation of D-ribulose 1,5-bisphosphate, the primary event in carbon dioxide fixation, as well as the oxidative fragmentation of the pentose substrate in the photorespiration process. Both reactions occur simultaneously and in competition at the same active site. The sequence is that of Ribulose bisphosphate carboxylase large chain from Justicia odora (Water willow).